The primary structure comprises 905 residues: Core protein VP3 (905 aa).

The protein belongs to the orbivirus VP3 family.

The protein resides in the virion. The VP3 protein is one of the five proteins (with VP1, VP4, VP6 and VP7) which form the inner capsid of the virus. The chain is Core protein VP3 (Segment-3) from African horse sickness virus 6 (AHSV-6).